Reading from the N-terminus, the 533-residue chain is Phospho-2-dehydro-3-deoxyheptonate aldolase 1, chloroplastic (533 aa).

Residues 1–57 constitute a chloroplast transit peptide; it reads MALSTNSTTSSLLPKTPLVQQPLLKNASLPTTTKAIRFIQPISAIHSSDSSKNTPIV. Over residues 47 to 56 the composition is skewed to polar residues; the sequence is SSDSSKNTPI. Residues 47-70 are disordered; that stretch reads SSDSSKNTPIVSAKPSSPPAATST. The span at 57–70 shows a compositional bias: low complexity; that stretch reads VSAKPSSPPAATST. Cys-145 contributes to the Mn(2+) binding site. Residues Arg-184, 343–344, Lys-366, and Arg-397 each bind substrate; that span reads ER. Mn(2+)-binding residues include His-429, Glu-471, and Asp-501.

This sequence belongs to the class-II DAHP synthase family. In terms of assembly, homodimer. Requires Mn(2+) as cofactor. In terms of tissue distribution, mostly expressed in flowers, especially in petal limbs and tubes, and, to a lower extent, in roots, stems, stigmas, anthers, leaves and sepals.

The protein localises to the plastid. The protein resides in the chloroplast. It carries out the reaction D-erythrose 4-phosphate + phosphoenolpyruvate + H2O = 7-phospho-2-dehydro-3-deoxy-D-arabino-heptonate + phosphate. It functions in the pathway metabolic intermediate biosynthesis; chorismate biosynthesis; chorismate from D-erythrose 4-phosphate and phosphoenolpyruvate: step 1/7. Its function is as follows. Involved in the production of volatile organic compounds (VOCs), including floral volatile benzenoids and phenylpropanoids (FVBP), in flowers of fragrant cultivars (e.g. cv. Mitchell and cv. V26), scent attracting pollinators (e.g. the night-active hawkmoth pollinator Manduca sexta). Catalyzes an aldol-like condensation reaction between phosphoenolpyruvate (PEP) and D-erythrose 4-phosphate (E4P) to generate 3-deoxy-D-arabino-heptulosonate 7-phosphate (DAH7P) and inorganic phosphate. The polypeptide is Phospho-2-dehydro-3-deoxyheptonate aldolase 1, chloroplastic (Petunia hybrida (Petunia)).